The primary structure comprises 403 residues: S-arrestin (403 aa).

Thr231 is subject to Phosphothreonine. The tract at residues 381–403 (RQNLKDTGENTEGKKDEDAGQDE) is disordered.

The protein belongs to the arrestin family. In terms of assembly, monomer. Homodimer. Homotetramer. Interacts with RHO (via the phosphorylated C-terminus). Retina and pineal gland.

It is found in the cell projection. The protein localises to the cilium. It localises to the photoreceptor outer segment. Its subcellular location is the membrane. In terms of biological role, binds to photoactivated, phosphorylated RHO and terminates RHO signaling via G-proteins by competing with G-proteins for the same binding site on RHO. May play a role in preventing light-dependent degeneration of retinal photoreceptor cells. The sequence is that of S-arrestin (Sag) from Rattus norvegicus (Rat).